Here is a 79-residue protein sequence, read N- to C-terminus: D-alanyl carrier protein (79 aa).

In terms of domain architecture, Carrier spans Met-1–Gln-77. Ser-35 is modified (O-(pantetheine 4'-phosphoryl)serine).

This sequence belongs to the DltC family. In terms of processing, 4'-phosphopantetheine is transferred from CoA to a specific serine of apo-DCP.

It is found in the cytoplasm. It participates in cell wall biogenesis; lipoteichoic acid biosynthesis. Carrier protein involved in the D-alanylation of lipoteichoic acid (LTA). The loading of thioester-linked D-alanine onto DltC is catalyzed by D-alanine--D-alanyl carrier protein ligase DltA. The DltC-carried D-alanyl group is further transferred to cell membrane phosphatidylglycerol (PG) by forming an ester bond, probably catalyzed by DltD. D-alanylation of LTA plays an important role in modulating the properties of the cell wall in Gram-positive bacteria, influencing the net charge of the cell wall. This Streptococcus uberis (strain ATCC BAA-854 / 0140J) protein is D-alanyl carrier protein.